Reading from the N-terminus, the 183-residue chain is Glutathione-regulated potassium-efflux system ancillary protein KefG (183 aa).

It belongs to the NAD(P)H dehydrogenase (quinone) family. KefG subfamily. As to quaternary structure, interacts with KefB.

It localises to the cell inner membrane. The catalysed reaction is a quinone + NADH + H(+) = a quinol + NAD(+). It catalyses the reaction a quinone + NADPH + H(+) = a quinol + NADP(+). In terms of biological role, regulatory subunit of a potassium efflux system that confers protection against electrophiles. Required for full activity of KefB. The sequence is that of Glutathione-regulated potassium-efflux system ancillary protein KefG from Salmonella gallinarum (strain 287/91 / NCTC 13346).